The following is a 241-amino-acid chain: Polycomb group RING finger protein 3 (241 aa).

An RING-type zinc finger spans residues 17–56 (CRLCSGYLIDATTVTECLHTFCRSCLVKYLEENNTCPTCR). Residues 115 to 148 (AKQHLDPRNGETKADDNSNKETAEEKQEEDNDYH) are disordered. Residues 117-139 (QHLDPRNGETKADDNSNKETAEE) are compositionally biased toward basic and acidic residues. Residues 131–241 (NSNKETAEEK…LHYRPKMDLL (111 aa)) form an interaction with BCORL1 region.

As to quaternary structure, component of a PRC1-like complex that contains PCGF3, RNF2 and RYBP. Interacts with RNF2. Interacts with CBX6, CBX7 and CBX8. Interacts with BCORL1.

It localises to the nucleus. Its subcellular location is the nucleoplasm. Functionally, component of a Polycomb group (PcG) multiprotein PRC1-like complex, a complex class required to maintain the transcriptionally repressive state of many genes, including Hox genes, throughout development. PcG PRC1 complex acts via chromatin remodeling and modification of histones; it mediates monoubiquitination of histone H2A 'Lys-119', rendering chromatin heritably changed in its expressibility. Within the PRC1-like complex, regulates RNF2 ubiquitin ligase activity. Plays a redundant role with PCGF5 as part of a PRC1-like complex that mediates monoubiquitination of histone H2A 'Lys-119' on the X chromosome and is required for normal silencing of one copy of the X chromosome in XX females. This is Polycomb group RING finger protein 3 (PcgF3) from Mus musculus (Mouse).